A 269-amino-acid polypeptide reads, in one-letter code: MLGLQIFTLLSIPTLLYTYELELLDLTRTPPEKELEYWCTYANHCRFCWDCQDGICRNKVFENHSPILENDYIANCSVFRRNEFCTYYVTSIKPHEVYRTECPQQSHEWHEAVIRKWQKLLTYGFYLVGCVLVANYVRKRSLQTVMYLLVLLVIFFLLSQLMLYRELEDKKHKIGSIPPKRELEHWCTHGKYCDFCWDCQNGICRNKVFKNHPPIGENDFIRHDCWTIHLSNKCYYQKIYKYPDYHMMECSQPTPYKWYDNLMKKQDIM.

Positions 1 to 26 are cleaved as a signal peptide; it reads MLGLQIFTLLSIPTLLYTYELELLDL. An A repeat occupies 1–145; sequence MLGLQIFTLL…YVRKRSLQTV (145 aa). At 27–116 the chain is on the extracellular side; the sequence is TRTPPEKELE…HEWHEAVIRK (90 aa). N-linked (GlcNAc...) asparagine; by host glycosylation occurs at asparagine 75. The chain crosses the membrane as a helical span at residues 117 to 137; the sequence is WQKLLTYGFYLVGCVLVANYV. At 138-144 the chain is on the cytoplasmic side; the sequence is RKRSLQT. Residues 145-165 form a helical membrane-spanning segment; that stretch reads VMYLLVLLVIFFLLSQLMLYR. A B repeat occupies 147-269; that stretch reads YLLVLLVIFF…DNLMKKQDIM (123 aa). Topologically, residues 166–269 are extracellular; sequence ELEDKKHKIG…DNLMKKQDIM (104 aa).

The protein belongs to the asfivirus MGF 110 family.

It is found in the host membrane. Plays a role in virus cell tropism, and may be required for efficient virus replication in macrophages. The sequence is that of Protein MGF 110-1L from African swine fever virus (isolate Warthog/Namibia/Wart80/1980) (ASFV).